A 435-amino-acid chain; its full sequence is 3-phosphoshikimate 1-carboxyvinyltransferase (435 aa).

Residues lysine 21, serine 22, and arginine 26 each contribute to the 3-phosphoshikimate site. Position 21 (lysine 21) interacts with phosphoenolpyruvate. Glycine 99 and arginine 127 together coordinate phosphoenolpyruvate. Positions 173, 175, 323, and 350 each coordinate 3-phosphoshikimate. Glutamine 175 serves as a coordination point for phosphoenolpyruvate. Aspartate 323 serves as the catalytic Proton acceptor. Arginine 354 and arginine 396 together coordinate phosphoenolpyruvate.

It belongs to the EPSP synthase family. In terms of assembly, monomer.

Its subcellular location is the cytoplasm. The enzyme catalyses 3-phosphoshikimate + phosphoenolpyruvate = 5-O-(1-carboxyvinyl)-3-phosphoshikimate + phosphate. The protein operates within metabolic intermediate biosynthesis; chorismate biosynthesis; chorismate from D-erythrose 4-phosphate and phosphoenolpyruvate: step 6/7. Functionally, catalyzes the transfer of the enolpyruvyl moiety of phosphoenolpyruvate (PEP) to the 5-hydroxyl of shikimate-3-phosphate (S3P) to produce enolpyruvyl shikimate-3-phosphate and inorganic phosphate. This Akkermansia muciniphila (strain ATCC BAA-835 / DSM 22959 / JCM 33894 / BCRC 81048 / CCUG 64013 / CIP 107961 / Muc) protein is 3-phosphoshikimate 1-carboxyvinyltransferase.